The following is a 1060-amino-acid chain: Carbamoyl phosphate synthase large chain (1060 aa).

The interval 1-401 (MPKRTDIRKI…SLLKAVRSLE (401 aa)) is carboxyphosphate synthetic domain. Positions 129, 169, 175, 176, 208, 210, 215, 241, 242, 243, 284, and 298 each coordinate ATP. The region spanning 133-327 (KNLMNQLNEP…IAKMAAKIAV (195 aa)) is the ATP-grasp 1 domain. Mg(2+)-binding residues include Q284, E298, and N300. Mn(2+) is bound by residues Q284, E298, and N300. The tract at residues 402–546 (IGTAHLELDG…YTTYEQENES (145 aa)) is oligomerization domain. The interval 547–929 (LVSAKPSILV…ALYKAFEASG (383 aa)) is carbamoyl phosphate synthetic domain. The ATP-grasp 2 domain maps to 671–861 (DQLIQELNIP…MAQLATQLIL (191 aa)). Residues R707, R746, L748, E752, G777, V778, H779, S780, Q820, and E832 each contribute to the ATP site. Positions 820, 832, and 834 each coordinate Mg(2+). 3 residues coordinate Mn(2+): Q820, E832, and N834. Residues 930-1060 (MHLPSHGNVL…ESQSLLTKPL (131 aa)) enclose the MGS-like domain. The interval 930 to 1060 (MHLPSHGNVL…ESQSLLTKPL (131 aa)) is allosteric domain.

The protein belongs to the CarB family. Composed of two chains; the small (or glutamine) chain promotes the hydrolysis of glutamine to ammonia, which is used by the large (or ammonia) chain to synthesize carbamoyl phosphate. Tetramer of heterodimers (alpha,beta)4. Requires Mg(2+) as cofactor. The cofactor is Mn(2+).

The catalysed reaction is hydrogencarbonate + L-glutamine + 2 ATP + H2O = carbamoyl phosphate + L-glutamate + 2 ADP + phosphate + 2 H(+). It catalyses the reaction hydrogencarbonate + NH4(+) + 2 ATP = carbamoyl phosphate + 2 ADP + phosphate + 2 H(+). It functions in the pathway amino-acid biosynthesis; L-arginine biosynthesis; carbamoyl phosphate from bicarbonate: step 1/1. It participates in pyrimidine metabolism; UMP biosynthesis via de novo pathway; (S)-dihydroorotate from bicarbonate: step 1/3. Large subunit of the glutamine-dependent carbamoyl phosphate synthetase (CPSase). CPSase catalyzes the formation of carbamoyl phosphate from the ammonia moiety of glutamine, carbonate, and phosphate donated by ATP, constituting the first step of 2 biosynthetic pathways, one leading to arginine and/or urea and the other to pyrimidine nucleotides. The large subunit (synthetase) binds the substrates ammonia (free or transferred from glutamine from the small subunit), hydrogencarbonate and ATP and carries out an ATP-coupled ligase reaction, activating hydrogencarbonate by forming carboxy phosphate which reacts with ammonia to form carbamoyl phosphate. This is Carbamoyl phosphate synthase large chain from Latilactobacillus sakei subsp. sakei (strain 23K) (Lactobacillus sakei subsp. sakei).